Reading from the N-terminus, the 66-residue chain is DNA-directed RNA polymerase subunit omega (66 aa).

It belongs to the RNA polymerase subunit omega family. As to quaternary structure, the RNAP catalytic core consists of 2 alpha, 1 beta, 1 beta' and 1 omega subunit. When a sigma factor is associated with the core the holoenzyme is formed, which can initiate transcription.

The catalysed reaction is RNA(n) + a ribonucleoside 5'-triphosphate = RNA(n+1) + diphosphate. Promotes RNA polymerase assembly. Latches the N- and C-terminal regions of the beta' subunit thereby facilitating its interaction with the beta and alpha subunits. The polypeptide is DNA-directed RNA polymerase subunit omega (Bacillus licheniformis (strain ATCC 14580 / DSM 13 / JCM 2505 / CCUG 7422 / NBRC 12200 / NCIMB 9375 / NCTC 10341 / NRRL NRS-1264 / Gibson 46)).